Consider the following 298-residue polypeptide: Mimecan (298 aa).

Residues 1–20 form the signal peptide; sequence MKTLQSTLLLLLLVPLIKPA. Thr80 carries O-linked (GalNAc...) threonine glycosylation. The N-linked (GlcNAc...) (keratan sulfate) asparagine glycan is linked to Asn88. LRR repeat units follow at residues 112-131, 132-155, 156-179, 180-199, 200-225, 226-246, and 247-277; these read DAVPPLPKESAYLYARFNKI, KKLTAKDFADIPNLRRLDFTGNLI, EDIEDGTFSKLSLLEELSLAENQL, LKLPVLPPKLTLFNAKYNKI, KSRGIKANAFKKLNNLTFLYLDHNAL, ESVPLNLPESLRVIHLQFNNI, and ASITDDTFCKANDTSYIRDRIEEIRLEGNPI. Asn214 carries an N-linked (GlcNAc...) (keratan sulfate) asparagine glycan. Cys255 and Cys288 form a disulfide bridge. An N-linked (GlcNAc...) (keratan sulfate) asparagine glycan is attached at Asn258.

This sequence belongs to the small leucine-rich proteoglycan (SLRP) family. SLRP class III subfamily. Post-translationally, O-glycosylated with a core 1 or possibly core 8 glycan. Contains keratan sulfate. Bone.

The protein localises to the secreted. It localises to the extracellular space. It is found in the extracellular matrix. Induces bone formation in conjunction with TGF-beta-1 or TGF-beta-2. The protein is Mimecan (OGN) of Homo sapiens (Human).